Here is a 1183-residue protein sequence, read N- to C-terminus: MEQSNKQHRKAKEKNTAKKKLHTQGHNAKAFAVAAPGKMARTMQRSSDVNERKLHVPMVDRTPEDDPPPFIVAVVGPPGTGKTTLIRSLVRRMTKSTLNDIQGPITVVSGKHRRLTFLECPADDLNAMIDIAKIADLVLLLIDGNFGFEMETMEFLNIAQHHGMPRVLGVATHLDLFKSQSTLRASKKRLKHRFWTEVYQGAKLFYLSGVINGRYPDREILNLSRFISVMKFRPLKWRNEHPYMLADRFTDLTHPELIETQGLQIDRKVAIYGYLHGTPLPSAPGTRVHIAGVGDFSVAQIEKLPDPCPTPFYQQKLDDFEREKMKEEAKANGEITTASTTRRRKRLDDKDKLIYAPMSDVGGVLMDKDAVYIDIGKKNEEPSFVPGQERGEGEKLMTGLQSVEQSIAEKFDGVGLQLFSNGTELHEVADHEGMDVESGEESIEDDEGKSKGRTSLRKPRIYGKPVQEEDADIDNLPSDEEPYTNDDDVQDSEPRMVEIDFNNTGEQGAEKLALETDSEFEESEDEFSWERTAANKLKKTESKKRTWNIGKLIYMDNISPEECIRRWRGEDDDSKDESDIEEDVDDDFFRKKDGTVTKEGNKDHAVDLEKFVPYFDTFEKLAKKWKSVDAIKERFLGAGILGNDNKTKSDSNEGGEELYGDFEDLEDGNPSEQAEDNSDKESEDEDENEDTNGDDDNSFTNFDAEEKKDLTMEQEREMNAAKKEKLRAQFEIEEGENFKEDDENNEYDTWYELQKAKISKQLEINNIEYQEMTPEQRQRIEGFKAGSYVRIVFEKVPMEFVKNFNPKFPIVMGGLLPTEIKFGIVKARLRRHRWHKKILKTNDPLVLSLGWRRFQTLPIYTTTDSRTRTRMLKYTPEHTYCNAAFYGPLCSPNTPFCGVQIVANSDTGNGFRIAATGIVEEIDVNIEIVKKLKLVGFPYKIFKNTAFIKDMFSSAMEVARFEGAQIKTVSGIRGEIKRALSKPEGHYRAAFEDKILMSDIVILRSWYPVRVKKFYNPVTSLLLKEKTEWKGLRLTGQIRAAMNLETPSNPDSAYHKIERVERHFNGLKVPKAVQKELPFKSQIHQMKPQKKKTYMAKRAVVLGGDEKKARSFIQKVLTISKAKDSKRKEQKASQRKERLKKLAKMEEEKSQRDKEKKKEYFAQNGKRTTMGGDDESRPRKMRR.

Residues 1 to 23 (MEQSNKQHRKAKEKNTAKKKLHT) show a composition bias toward basic residues. A disordered region spans residues 1 to 39 (MEQSNKQHRKAKEKNTAKKKLHTQGHNAKAFAVAAPGKM). Residues 68–233 (PPFIVAVVGP…SRFISVMKFR (166 aa)) form the Bms1-type G domain. The G1 stretch occupies residues 76-83 (GPPGTGKT). An ATP-binding site is contributed by 76–83 (GPPGTGKT). Positions 104–108 (PITVV) are G2. The interval 119 to 122 (ECPA) is G3. Residues 172–175 (THLD) are G4. A G5 region spans residues 207–216 (LSGVINGRYP). The interval 427 to 494 (EVADHEGMDV…NDDDVQDSEP (68 aa)) is disordered. Positions 435–447 (DVESGEESIEDDE) are enriched in acidic residues. Position 438 is a phosphoserine (serine 438). A compositionally biased stretch (basic residues) spans 451–461 (KGRTSLRKPRI). Residues 468-491 (EEDADIDNLPSDEEPYTNDDDVQD) are compositionally biased toward acidic residues. Phosphoserine is present on residues serine 478 and serine 492. Phosphothreonine occurs at positions 504 and 516. Serine 518 and serine 523 each carry phosphoserine. Positions 536–559 (KLKKTESKKRTWNIGKLIYMDNIS) are RCL1-binding. Phosphoserine is present on residues serine 574 and serine 578. Disordered regions lie at residues 639-709 (GILG…EKKD) and 1123-1183 (KDSK…KMRR). Residues 653–697 (EGGEELYGDFEDLEDGNPSEQAEDNSDKESEDEDENEDTNGDDDN) are compositionally biased toward acidic residues. 3 stretches are compositionally biased toward basic and acidic residues: residues 1123 to 1136 (KDSK…SQRK), 1143 to 1160 (AKME…KKEY), and 1174 to 1183 (DESRPRKMRR).

The protein belongs to the TRAFAC class translation factor GTPase superfamily. Bms1-like GTPase family. BMS1 subfamily. As to quaternary structure, interacts directly with RCL1 and the U3 snoRNA to form a stable subcomplex. Component of the 90S small subunit processome also known as 90S pre-ribosome that consists of the 35S pre-rRNA, early-associating ribosomal proteins most of which are part of the small ribosomal subunit, the U3 snoRNA and associated proteins.

The protein resides in the cytoplasm. It is found in the nucleus. The protein localises to the nucleolus. It catalyses the reaction GTP + H2O = GDP + phosphate + H(+). Interactions with RCL1 stimulates its GTPase and U3 snoRNA binding activities. RCL1 activates BMS1 by promoting GDP/GTP exchange. Functionally, GTPase required for synthesis of 40S ribosomal subunits and for processing the 35S pre-rRNA at sites A0, A1, and A2. Controls access of pre-ribosomal RNA intermediates to RCL1 during ribosome biogenesis by binding of RCL1 in a GTP-dependent manner and, via its affinity to U3 snoRNA, delivering it to pre-ribosomes. GTP-binding and/or GTP hydrolysis may induce conformational rearrangements within the BMS1-RCL1 complex allowing the interaction of RCL1 with its RNA substrate. Required for RCL1 import into the nucleus. This chain is Ribosome biogenesis protein BMS1 (BMS1), found in Saccharomyces cerevisiae (strain ATCC 204508 / S288c) (Baker's yeast).